The chain runs to 317 residues: ATP synthase gamma chain (317 aa).

Belongs to the ATPase gamma chain family. In terms of assembly, F-type ATPases have 2 components, CF(1) - the catalytic core - and CF(0) - the membrane proton channel. CF(1) has five subunits: alpha(3), beta(3), gamma(1), delta(1), epsilon(1). CF(0) has three main subunits: a, b and c.

It is found in the cellular thylakoid membrane. In terms of biological role, produces ATP from ADP in the presence of a proton gradient across the membrane. The gamma chain is believed to be important in regulating ATPase activity and the flow of protons through the CF(0) complex. The protein is ATP synthase gamma chain of Synechococcus sp. (strain CC9311).